Here is a 788-residue protein sequence, read N- to C-terminus: Putative wall-associated receptor kinase-like 11 (788 aa).

Residues 1-27 (MRCDNNYSFSILFSLLLILILDSKVVS) form the signal peptide. Topologically, residues 28–375 (LSTSCQSKSV…TFNCIGNKTR (348 aa)) are extracellular. Asparagine 65, asparagine 80, asparagine 121, asparagine 159, asparagine 233, asparagine 253, asparagine 278, asparagine 295, and asparagine 310 each carry an N-linked (GlcNAc...) asparagine glycan. The tract at residues 306–369 (CICNNVTISG…CVNLPGTFNC (64 aa)) is atypical EGF-like. Intrachain disulfides connect cysteine 308-cysteine 321, cysteine 343-cysteine 360, and cysteine 354-cysteine 369. Asparagine 372 carries N-linked (GlcNAc...) asparagine glycosylation. The chain crosses the membrane as a helical span at residues 376 to 396 (VTMIGVGSAFGILVLVVGIWW). The Cytoplasmic portion of the chain corresponds to 397-788 (LRKFLKKRRM…QPLFPHPTWI (392 aa)). The Protein kinase domain maps to 451 to 726 (FSESRILGQG…KVFTDLEKIL (276 aa)). Residues 457-465 (LGQGGQGTV) and lysine 479 each bind ATP. Phosphotyrosine is present on tyrosine 524. Aspartate 576 functions as the Proton acceptor in the catalytic mechanism. Phosphothreonine is present on residues threonine 610 and threonine 615. The residue at position 623 (tyrosine 623) is a Phosphotyrosine.

Belongs to the protein kinase superfamily. Ser/Thr protein kinase family.

It is found in the membrane. The enzyme catalyses L-seryl-[protein] + ATP = O-phospho-L-seryl-[protein] + ADP + H(+). The catalysed reaction is L-threonyl-[protein] + ATP = O-phospho-L-threonyl-[protein] + ADP + H(+). In terms of biological role, putative serine/threonine-protein kinase that may function as a signaling receptor of extracellular matrix component. This is Putative wall-associated receptor kinase-like 11 (WAKL11) from Arabidopsis thaliana (Mouse-ear cress).